Consider the following 61-residue polypeptide: Small ribosomal subunit protein bS21 (61 aa).

Belongs to the bacterial ribosomal protein bS21 family.

The chain is Small ribosomal subunit protein bS21 from Leuconostoc mesenteroides subsp. mesenteroides (strain ATCC 8293 / DSM 20343 / BCRC 11652 / CCM 1803 / JCM 6124 / NCDO 523 / NBRC 100496 / NCIMB 8023 / NCTC 12954 / NRRL B-1118 / 37Y).